The primary structure comprises 629 residues: UvrABC system protein C (629 aa).

The 80-residue stretch at Thr26–Val105 folds into the GIY-YIG domain. A UVR domain is found at Ser219–Tyr254.

It belongs to the UvrC family. In terms of assembly, interacts with UvrB in an incision complex.

It localises to the cytoplasm. Its function is as follows. The UvrABC repair system catalyzes the recognition and processing of DNA lesions. UvrC both incises the 5' and 3' sides of the lesion. The N-terminal half is responsible for the 3' incision and the C-terminal half is responsible for the 5' incision. This chain is UvrABC system protein C, found in Chlorobium chlorochromatii (strain CaD3).